Consider the following 273-residue polypeptide: Phosphonates import ATP-binding protein PhnC (273 aa).

The region spanning L2–A245 is the ABC transporter domain. G34–S41 contributes to the ATP binding site.

The protein belongs to the ABC transporter superfamily. Phosphonates importer (TC 3.A.1.9.1) family. As to quaternary structure, the complex is composed of two ATP-binding proteins (PhnC), two transmembrane proteins (PhnE) and a solute-binding protein (PhnD).

It is found in the cell inner membrane. The enzyme catalyses phosphonate(out) + ATP + H2O = phosphonate(in) + ADP + phosphate + H(+). Functionally, part of the ABC transporter complex PhnCDE involved in phosphonates import. Responsible for energy coupling to the transport system. The sequence is that of Phosphonates import ATP-binding protein PhnC from Ruegeria pomeroyi (strain ATCC 700808 / DSM 15171 / DSS-3) (Silicibacter pomeroyi).